The chain runs to 145 residues: RNA polymerase I-specific transcription initiation factor RRN10 (145 aa).

Component of the UAF (upstream activation factor) complex which consists of UAF30, RRN5, RRN9, RRN10, and histones H3 and H4.

Its subcellular location is the nucleus. It is found in the nucleolus. Functionally, component of the UAF (upstream activation factor) complex which interacts with the upstream element of the RNA polymerase I promoter and forms a stable preinitiation complex. Together with SPT15/TBP UAF seems to stimulate basal transcription to a fully activated level. The sequence is that of RNA polymerase I-specific transcription initiation factor RRN10 (RRN10) from Saccharomyces cerevisiae (strain ATCC 204508 / S288c) (Baker's yeast).